The primary structure comprises 416 residues: 4-hydroxy-3-methylbut-2-en-1-yl diphosphate synthase (flavodoxin) (416 aa).

4 residues coordinate [4Fe-4S] cluster: Cys304, Cys307, Cys350, and Glu357.

The protein belongs to the IspG family. Requires [4Fe-4S] cluster as cofactor.

The enzyme catalyses (2E)-4-hydroxy-3-methylbut-2-enyl diphosphate + oxidized [flavodoxin] + H2O + 2 H(+) = 2-C-methyl-D-erythritol 2,4-cyclic diphosphate + reduced [flavodoxin]. The protein operates within isoprenoid biosynthesis; isopentenyl diphosphate biosynthesis via DXP pathway; isopentenyl diphosphate from 1-deoxy-D-xylulose 5-phosphate: step 5/6. Functionally, converts 2C-methyl-D-erythritol 2,4-cyclodiphosphate (ME-2,4cPP) into 1-hydroxy-2-methyl-2-(E)-butenyl 4-diphosphate. This is 4-hydroxy-3-methylbut-2-en-1-yl diphosphate synthase (flavodoxin) from Burkholderia pseudomallei (strain K96243).